Reading from the N-terminus, the 512-residue chain is ADP,ATP carrier protein 4 (512 aa).

The next 12 helical transmembrane spans lie at 34-54, 71-91, 102-122, 157-177, 192-212, 231-251, 296-316, 330-350, 361-381, 390-410, 448-468, and 476-496; these read ISKF…QNLI, ISFL…VMYV, IFYL…YVIF, FSLF…LLFW, FYPL…HFLE, FHTL…IVSI, LIAT…GPWK, AAFI…FVLL, FTSA…FFAF, LIIA…IGAI, VIGT…IFII, and SISI…IWAT.

It belongs to the ADP/ATP translocase tlc family.

It is found in the cell membrane. Its function is as follows. Provides the rickettsial cell with host ATP in exchange for rickettsial ADP. This is an obligate exchange system. This energy acquiring activity is an important component of rickettsial parasitism. The protein is ADP,ATP carrier protein 4 (tlcD) of Rickettsia typhi (strain ATCC VR-144 / Wilmington).